We begin with the raw amino-acid sequence, 462 residues long: Violaxanthin de-epoxidase, chloroplastic (462 aa).

Cysteine 231 and cysteine 362 are oxidised to a cystine. Residues 372–437 (IEKTVEEGER…RELSKEEMEF (66 aa)) are a coiled coil. Residues 380–391 (ERIIVKEVEEIE) form an involved in the binding to the thylakoid membrane region.

This sequence belongs to the calycin superfamily. Lipocalin family. As to quaternary structure, interacts in vitro with LTO1.

The protein resides in the plastid. It is found in the chloroplast thylakoid membrane. The catalysed reaction is all-trans-violaxanthin + 2 L-ascorbate = all-trans-zeaxanthin + 2 L-dehydroascorbate + 2 H2O. With respect to regulation, activity limited by low ascorbate availability. Feedback inhibition by zeaxanthin. Requires the presence of micelle-forming lipids such as monogalactosyldiacylglyceride (MGDG). Low concentration of bilayer forming lipids, such as digalactosyldiacylglyceride (DGDG) or phosphatidylcholine, supports a slower but nearly complete activity. 80% of the specific activity in lumenal chloroplast fractions is lost in vitro in the presence of reduced thioredoxin. Part of the xanthophyll (or violaxanthin) cycle for controlling the concentration of zeaxanthin in chloroplasts. Catalyzes the two-step mono de-epoxidation reaction. Stereospecific for all-trans xanthophylls. Zeaxanthin induces the dissipation of excitation energy in the chlorophyll of the light-harvesting protein complex of photosystem II. The chain is Violaxanthin de-epoxidase, chloroplastic from Arabidopsis thaliana (Mouse-ear cress).